The sequence spans 211 residues: Protein-methionine-sulfoxide reductase heme-binding subunit MsrQ (211 aa).

Helical transmembrane passes span 17 to 37 (LAGL…GLGA), 82 to 102 (LWCF…ELGV), 116 to 136 (PYLT…FTST), 153 to 173 (FVYL…KIIS), and 178 to 198 (IYAG…LSLF).

It belongs to the MsrQ family. Heterodimer of a catalytic subunit (MsrP) and a heme-binding subunit (MsrQ). The cofactor is FMN. It depends on heme b as a cofactor.

It is found in the cell inner membrane. Its function is as follows. Part of the MsrPQ system that repairs oxidized periplasmic proteins containing methionine sulfoxide residues (Met-O), using respiratory chain electrons. Thus protects these proteins from oxidative-stress damage caused by reactive species of oxygen and chlorine generated by the host defense mechanisms. MsrPQ is essential for the maintenance of envelope integrity under bleach stress, rescuing a wide series of structurally unrelated periplasmic proteins from methionine oxidation, including the primary periplasmic chaperone SurA and the lipoprotein Pal. MsrQ provides electrons for reduction to the reductase catalytic subunit MsrP, using the quinone pool of the respiratory chain. This chain is Protein-methionine-sulfoxide reductase heme-binding subunit MsrQ, found in Shigella boydii serotype 4 (strain Sb227).